A 317-amino-acid chain; its full sequence is uncharacterized protein (317 aa).

The HTH lysR-type domain maps to 1–60 (MKHELSSMKAFVILAESSSFNNAAKLLNITQPALTRRIKKMEEDLHVQLFERTTRKVTLT). Residues 20–40 (FNNAAKLLNITQPALTRRIKK) constitute a DNA-binding region (H-T-H motif).

Belongs to the LysR transcriptional regulatory family.

This is an uncharacterized protein from Escherichia coli (strain K12).